Reading from the N-terminus, the 299-residue chain is CCR4-NOT transcription complex subunit 9 (299 aa).

Methionine 1 carries the post-translational modification N-acetylmethionine.

This sequence belongs to the CNOT9 family. Homodimer. Component of the CCR4-NOT complex; distinct complexes seem to exist that differ in the participation of probably mutually exclusive catalytic subunits. Interacts with MYB, ATF2, RARA, RARB, RARG, RXRA, RXRB and RXRG. Identified in a complex with ATF2 bound to target DNA. Interacts with NANOS2. Directly interacts with ZNF335. As to expression, detected in spleen, thymus, prostate, testis, ovary and intestine.

Its subcellular location is the nucleus. The protein resides in the cytoplasm. The protein localises to the P-body. Functionally, component of the CCR4-NOT complex which is one of the major cellular mRNA deadenylases and is linked to various cellular processes including bulk mRNA degradation, miRNA-mediated repression, translational repression during translational initiation and general transcription regulation. Additional complex functions may be a consequence of its influence on mRNA expression. Involved in down-regulation of MYB- and JUN-dependent transcription. May play a role in cell differentiation. Can bind oligonucleotides, such as poly-G, poly-C or poly-T (in vitro), but the physiological relevance of this is not certain. Does not bind poly-A. Enhances ligand-dependent transcriptional activity of nuclear hormone receptors, including RARA, expect ESR1-mediated transcription that is not only slightly increased, if at all. The chain is CCR4-NOT transcription complex subunit 9 from Homo sapiens (Human).